A 238-amino-acid polypeptide reads, in one-letter code: Thymidine kinase a (238 aa).

ATP-binding positions include 38-45, 70-72, and 115-118; these read GPMFSGKS, DTR, and DEAQ. Glutamate 116 functions as the Proton acceptor in the catalytic mechanism. Residue tyrosine 147 coordinates substrate. Zn(2+) is bound by residues cysteine 172 and cysteine 175. Substrate is bound by residues 191 to 195 and tyrosine 200; that span reads TELIG. Cysteine 204 provides a ligand contact to Zn(2+).

The protein belongs to the thymidine kinase family. In terms of assembly, monomer and dimer. Dimerization is stimulated by ATP. In terms of tissue distribution, expressed ubiquitously.

The protein resides in the cytoplasm. The catalysed reaction is thymidine + ATP = dTMP + ADP + H(+). It functions in the pathway purine metabolism. It participates in pyrimidine metabolism. In terms of biological role, part of the salvage pathway for purine and pyrimidine deoxyribonucleotide synthesis. Phosphorylates preferentially purines over pyrimidines. Mediates tolerance to genotoxins, such as ultraviolet-C (UV-C) irradiation, MMC, a DNA crosslinker, and ZEO, a DNA intercalator, that induce double-strand breaks and thus contributes to several DNA repair pathways by providing deoxythymidine triphosphate that serve as precursors for DNA repair and to balance deoxyribonucleotides pools. This Arabidopsis thaliana (Mouse-ear cress) protein is Thymidine kinase a.